A 255-amino-acid polypeptide reads, in one-letter code: EEF1A lysine methyltransferase 4 (255 aa).

Tryptophan 26 and tyrosine 30 together coordinate S-adenosyl-L-methionine. Phosphotyrosine is present on tyrosine 39. S-adenosyl-L-methionine contacts are provided by residues tryptophan 41, glycine 66, 88-89 (DY), 113-114 (DV), and lysine 130. The Required for methyltransferase activity motif lies at 129–134 (EKGTLD).

It belongs to the methyltransferase superfamily.

The enzyme catalyses L-lysyl-[protein] + S-adenosyl-L-methionine = N(6)-methyl-L-lysyl-[protein] + S-adenosyl-L-homocysteine + H(+). The catalysed reaction is N(6)-methyl-L-lysyl-[protein] + S-adenosyl-L-methionine = N(6),N(6)-dimethyl-L-lysyl-[protein] + S-adenosyl-L-homocysteine + H(+). It carries out the reaction N(6),N(6)-dimethyl-L-lysyl-[protein] + S-adenosyl-L-methionine = N(6),N(6),N(6)-trimethyl-L-lysyl-[protein] + S-adenosyl-L-homocysteine + H(+). In terms of biological role, protein-lysine methyltransferase that efficiently catalyzes three successive methylations on 'Lys-36' in eukaryotic translation elongation factor 1 alpha (EEF1A1 or EEF1A2). The polypeptide is EEF1A lysine methyltransferase 4 (Homo sapiens (Human)).